A 183-amino-acid chain; its full sequence is Photosystem I assembly protein Ycf4 (183 aa).

2 consecutive transmembrane segments (helical) span residues 21-43 (YWWA…SSRL) and 58-80 (FIPQ…TYLW).

This sequence belongs to the Ycf4 family.

Its subcellular location is the plastid. It is found in the chloroplast thylakoid membrane. Functionally, seems to be required for the assembly of the photosystem I complex. The polypeptide is Photosystem I assembly protein Ycf4 (Nephroselmis olivacea (Green alga)).